Here is a 125-residue protein sequence, read N- to C-terminus: Small ribosomal subunit protein uS12 (125 aa).

3-methylthioaspartic acid is present on Asp-89. The segment at 106 to 125 is disordered; it reads GVKDRKQSRSKYGAKRPKKA. A compositionally biased stretch (basic residues) spans 113-125; the sequence is SRSKYGAKRPKKA.

It belongs to the universal ribosomal protein uS12 family. As to quaternary structure, part of the 30S ribosomal subunit. Contacts proteins S8 and S17. May interact with IF1 in the 30S initiation complex.

Its function is as follows. With S4 and S5 plays an important role in translational accuracy. In terms of biological role, interacts with and stabilizes bases of the 16S rRNA that are involved in tRNA selection in the A site and with the mRNA backbone. Located at the interface of the 30S and 50S subunits, it traverses the body of the 30S subunit contacting proteins on the other side and probably holding the rRNA structure together. The combined cluster of proteins S8, S12 and S17 appears to hold together the shoulder and platform of the 30S subunit. This chain is Small ribosomal subunit protein uS12, found in Variovorax paradoxus (strain S110).